Consider the following 200-residue polypeptide: Histone chaperone asf1a-B (200 aa).

Belongs to the ASF1 family. As to quaternary structure, interacts with histone H3 (including both histone H3.1 and H3.3) and histone H4.

The protein resides in the nucleus. In terms of biological role, histone chaperone that facilitates histone deposition and histone exchange and removal during nucleosome assembly and disassembly. In Xenopus laevis (African clawed frog), this protein is Histone chaperone asf1a-B (asf1ab).